The chain runs to 256 residues: Thiazole synthase (256 aa).

The Schiff-base intermediate with DXP role is filled by Lys-95. Residues Gly-156, 182 to 183 (AG), and 204 to 205 (NT) each bind 1-deoxy-D-xylulose 5-phosphate.

Belongs to the ThiG family. Homotetramer. Forms heterodimers with either ThiH or ThiS.

The protein resides in the cytoplasm. It carries out the reaction [ThiS sulfur-carrier protein]-C-terminal-Gly-aminoethanethioate + 2-iminoacetate + 1-deoxy-D-xylulose 5-phosphate = [ThiS sulfur-carrier protein]-C-terminal Gly-Gly + 2-[(2R,5Z)-2-carboxy-4-methylthiazol-5(2H)-ylidene]ethyl phosphate + 2 H2O + H(+). It participates in cofactor biosynthesis; thiamine diphosphate biosynthesis. Functionally, catalyzes the rearrangement of 1-deoxy-D-xylulose 5-phosphate (DXP) to produce the thiazole phosphate moiety of thiamine. Sulfur is provided by the thiocarboxylate moiety of the carrier protein ThiS. In vitro, sulfur can be provided by H(2)S. The protein is Thiazole synthase of Escherichia coli (strain 55989 / EAEC).